The chain runs to 304 residues: 6-dehydroglucose reductase (304 aa).

3 residues coordinate NADP(+): Trp-28, Arg-29, and Asp-56. Tyr-61 functions as the Proton donor in the catalytic mechanism. 3 residues coordinate D-glucose: Tyr-61, His-133, and Arg-134. Residues Ser-163, Asn-164, Gln-185, Ser-215, Leu-217, Gly-219, Gly-268, Ser-269, Gln-270, and Arg-274 each coordinate NADP(+).

This sequence belongs to the aldo/keto reductase family.

The catalysed reaction is D-glucose + NADP(+) = 6-dehydro-D-glucose + NADPH + H(+). Functionally, part of the alkanesulfonate monooxygenase (sulfo-ASMO) pathway, a D-sulfoquinovose degradation pathway that enables the complete utilization of all carbons within sulfoquinovose (SQ) with concomitant production of inorganic sulfite. Catalyzes the NADP-dependent reduction of 6-dehydro-D-glucose to D-glucose. Can also catalyze the reversible reaction, the formation of 6-dehydro-D-glucose from D-glucose in the presence of NADP(+). The protein is 6-dehydroglucose reductase of Novosphingobium aromaticivorans (strain ATCC 700278 / DSM 12444 / CCUG 56034 / CIP 105152 / NBRC 16084 / F199).